Reading from the N-terminus, the 409-residue chain is Proteasome-activating nucleotidase (409 aa).

Residues 1–22 (MTLSSAGGSRSHRHNGGHSERD) are disordered. The stretch at 23–58 (VEIRILKDKVRSLTKEKISLQKELEYYKNEITKLLS) forms a coiled coil. Residues 183 to 188 (GTGKTL) and His-322 contribute to the ATP site.

Belongs to the AAA ATPase family. In terms of assembly, homohexamer. The hexameric complex has a two-ring architecture resembling a top hat that caps the 20S proteasome core at one or both ends. Upon ATP-binding, the C-terminus of PAN interacts with the alpha-rings of the proteasome core by binding to the intersubunit pockets.

The protein resides in the cytoplasm. Functionally, ATPase which is responsible for recognizing, binding, unfolding and translocation of substrate proteins into the archaeal 20S proteasome core particle. Is essential for opening the gate of the 20S proteasome via an interaction with its C-terminus, thereby allowing substrate entry and access to the site of proteolysis. Thus, the C-termini of the proteasomal ATPase function like a 'key in a lock' to induce gate opening and therefore regulate proteolysis. Unfolding activity requires energy from ATP hydrolysis, whereas ATP binding alone promotes ATPase-20S proteasome association which triggers gate opening, and supports translocation of unfolded substrates. The protein is Proteasome-activating nucleotidase of Aeropyrum pernix (strain ATCC 700893 / DSM 11879 / JCM 9820 / NBRC 100138 / K1).